Consider the following 69-residue polypeptide: Large ribosomal subunit protein bL31 (69 aa).

Residues cysteine 16, cysteine 18, cysteine 38, and cysteine 41 each contribute to the Zn(2+) site.

The protein belongs to the bacterial ribosomal protein bL31 family. Type A subfamily. As to quaternary structure, part of the 50S ribosomal subunit. Zn(2+) serves as cofactor.

Binds the 23S rRNA. The sequence is that of Large ribosomal subunit protein bL31 from Cutibacterium acnes (strain DSM 16379 / KPA171202) (Propionibacterium acnes).